Reading from the N-terminus, the 479-residue chain is Protoheme IX farnesyltransferase (479 aa).

The unknown stretch occupies residues 1 to 207 (MAEQTATTTS…AYIRLTKPRL (207 aa)). 4 helical membrane-spanning segments follow: residues 20–40 (LLAG…TTAV), 64–84 (IGWL…CAVV), 98–118 (VLIT…VGAV), and 128–148 (LSVI…IALA). The span at 155 to 164 (TGDPTETQTT) shows a compositional bias: low complexity. A disordered region spans residues 155-186 (TGDPTETQTTPSKPEPDQDLPPASEYDPDLPA). The next 9 helical transmembrane spans lie at 207-227 (LMWL…TTTG), 231-251 (PGIA…SGTF), 271-291 (LATD…LTVI), 303-322 (AAIL…TLLL), 324-344 (PNTV…ALIG), 345-365 (WVAV…VIFL), 402-422 (HVIW…TIEA), 423-443 (LGIV…YFAI), and 459-479 (HASN…TLVI). Residues 208–476 (MWLLCLVASA…AVLIAIVFDT (269 aa)) form a protoheme IX prenyltransferase region.

This sequence in the C-terminal section; belongs to the UbiA prenyltransferase family. Protoheme IX farnesyltransferase subfamily.

The protein localises to the cell membrane. The catalysed reaction is heme b + (2E,6E)-farnesyl diphosphate + H2O = Fe(II)-heme o + diphosphate. It functions in the pathway porphyrin-containing compound metabolism; heme O biosynthesis; heme O from protoheme: step 1/1. In terms of biological role, converts heme B (protoheme IX) to heme O by substitution of the vinyl group on carbon 2 of heme B porphyrin ring with a hydroxyethyl farnesyl side group. The protein is Protoheme IX farnesyltransferase (ctaB) of Haloquadratum walsbyi (strain DSM 16790 / HBSQ001).